The following is a 268-amino-acid chain: Phosphatidylglycerol--prolipoprotein diacylglyceryl transferase (268 aa).

7 helical membrane passes run 27-47 (PALR…MWLL), 66-86 (LLFY…VLFY), 104-124 (GGMS…YIAW), 130-150 (FFAV…AGRI), 181-201 (PSQL…LYWF), 208-228 (VGAV…IVET), and 242-262 (FMTM…YLIL). R149 is an a 1,2-diacyl-sn-glycero-3-phospho-(1'-sn-glycerol) binding site.

This sequence belongs to the Lgt family.

The protein resides in the cell inner membrane. The catalysed reaction is L-cysteinyl-[prolipoprotein] + a 1,2-diacyl-sn-glycero-3-phospho-(1'-sn-glycerol) = an S-1,2-diacyl-sn-glyceryl-L-cysteinyl-[prolipoprotein] + sn-glycerol 1-phosphate + H(+). The protein operates within protein modification; lipoprotein biosynthesis (diacylglyceryl transfer). Functionally, catalyzes the transfer of the diacylglyceryl group from phosphatidylglycerol to the sulfhydryl group of the N-terminal cysteine of a prolipoprotein, the first step in the formation of mature lipoproteins. This chain is Phosphatidylglycerol--prolipoprotein diacylglyceryl transferase, found in Shewanella sp. (strain MR-4).